The sequence spans 215 residues: Small ribosomal subunit protein eS1 (215 aa).

Residues 195–215 form a disordered region; the sequence is SGMQEPQKNEPAPGGEAIAQN.

The protein belongs to the eukaryotic ribosomal protein eS1 family.

This chain is Small ribosomal subunit protein eS1, found in Thermoplasma acidophilum (strain ATCC 25905 / DSM 1728 / JCM 9062 / NBRC 15155 / AMRC-C165).